The sequence spans 101 residues: Cilia- and flagella-associated protein 141 (101 aa).

Microtubule inner protein component of sperm flagellar doublet microtubules.

It is found in the cytoplasm. It localises to the cytoskeleton. The protein resides in the cilium axoneme. The protein localises to the flagellum axoneme. Functionally, microtubule inner protein (MIP) part of the dynein-decorated doublet microtubules (DMTs) in cilia axoneme, which is required for motile cilia beating. The sequence is that of Cilia- and flagella-associated protein 141 from Mus musculus (Mouse).